The sequence spans 341 residues: NADH-quinone oxidoreductase subunit H 1 (341 aa).

The next 8 membrane-spanning stretches (helical) occupy residues 13 to 33, 82 to 102, 115 to 135, 161 to 181, 190 to 210, 248 to 268, 277 to 297, and 317 to 337; these read LVVIGQSLLLLILLLITIAYI, GVFLLAPLVSCVLALAAWAVI, VGVLYILAVSSLSVYGIIMAG, IGFVIIAVLLCVGSLNLTAIV, LLGWYWLPLFPVFVIFYVSAL, YVAITTMCAMGAILFLGGWLP, WVPGIIWFMLKGFFMFFLFAM, and VFLPLSLVMVVIVAGVLQFAG.

The protein belongs to the complex I subunit 1 family. As to quaternary structure, NDH-1 is composed of 14 different subunits. Subunits NuoA, H, J, K, L, M, N constitute the membrane sector of the complex.

It localises to the cell inner membrane. It carries out the reaction a quinone + NADH + 5 H(+)(in) = a quinol + NAD(+) + 4 H(+)(out). Its function is as follows. NDH-1 shuttles electrons from NADH, via FMN and iron-sulfur (Fe-S) centers, to quinones in the respiratory chain. The immediate electron acceptor for the enzyme in this species is believed to be ubiquinone. Couples the redox reaction to proton translocation (for every two electrons transferred, four hydrogen ions are translocated across the cytoplasmic membrane), and thus conserves the redox energy in a proton gradient. This subunit may bind ubiquinone. The sequence is that of NADH-quinone oxidoreductase subunit H 1 from Rhodopseudomonas palustris (strain BisB18).